We begin with the raw amino-acid sequence, 350 residues long: Phosphotriesterase-related protein (350 aa).

The a divalent metal cation site is built by histidine 22, histidine 24, glutamate 169, histidine 201, histidine 230, and aspartate 298.

The protein belongs to the metallo-dependent hydrolases superfamily. Phosphotriesterase family. A divalent metal cation serves as cofactor.

This is Phosphotriesterase-related protein from Drosophila melanogaster (Fruit fly).